A 604-amino-acid chain; its full sequence is Sulfite reductase [NADPH] flavoprotein alpha-component (604 aa).

Residues 66-204 (VTVLSASQTG…AADGWTGRIV (139 aa)) enclose the Flavodoxin-like domain. Residues 72–77 (SQTGNA), 119–122 (STQG), and 155–164 (LGDSSYPNFC) contribute to the FMN site. The tract at residues 212–231 (AKNRATPAPQTTPPAGLQTA) is disordered. Residues 216–231 (ATPAPQTTPPAGLQTA) show a composition bias toward low complexity. The 215-residue stretch at 239–453 (ADPFPAALLA…VERNDGFRLP (215 aa)) folds into the FAD-binding FR-type domain. FAD contacts are provided by residues T327, Q361, 391-394 (RLYS), 409-411 (TVG), and 424-427 (GGAS). NADP(+)-binding positions include 524-525 (SR), 530-534 (KIYVQ), and D566. Position 604 (Y604) interacts with FAD.

It belongs to the NADPH-dependent sulphite reductase flavoprotein subunit CysJ family. In the N-terminal section; belongs to the flavodoxin family. The protein in the C-terminal section; belongs to the flavoprotein pyridine nucleotide cytochrome reductase family. As to quaternary structure, alpha(8)-beta(8). The alpha component is a flavoprotein, the beta component is a hemoprotein. FAD is required as a cofactor. The cofactor is FMN.

The enzyme catalyses hydrogen sulfide + 3 NADP(+) + 3 H2O = sulfite + 3 NADPH + 4 H(+). It functions in the pathway sulfur metabolism; hydrogen sulfide biosynthesis; hydrogen sulfide from sulfite (NADPH route): step 1/1. Component of the sulfite reductase complex that catalyzes the 6-electron reduction of sulfite to sulfide. This is one of several activities required for the biosynthesis of L-cysteine from sulfate. The flavoprotein component catalyzes the electron flow from NADPH -&gt; FAD -&gt; FMN to the hemoprotein component. The sequence is that of Sulfite reductase [NADPH] flavoprotein alpha-component from Neisseria meningitidis serogroup C / serotype 2a (strain ATCC 700532 / DSM 15464 / FAM18).